Here is a 472-residue protein sequence, read N- to C-terminus: ATP synthase subunit beta (472 aa).

G157–T164 contacts ATP.

It belongs to the ATPase alpha/beta chains family. In terms of assembly, F-type ATPases have 2 components, CF(1) - the catalytic core - and CF(0) - the membrane proton channel. CF(1) has five subunits: alpha(3), beta(3), gamma(1), delta(1), epsilon(1). CF(0) has three main subunits: a(1), b(2) and c(9-12). The alpha and beta chains form an alternating ring which encloses part of the gamma chain. CF(1) is attached to CF(0) by a central stalk formed by the gamma and epsilon chains, while a peripheral stalk is formed by the delta and b chains.

Its subcellular location is the cell inner membrane. It catalyses the reaction ATP + H2O + 4 H(+)(in) = ADP + phosphate + 5 H(+)(out). Produces ATP from ADP in the presence of a proton gradient across the membrane. The catalytic sites are hosted primarily by the beta subunits. This Desulfatibacillum aliphaticivorans protein is ATP synthase subunit beta.